Consider the following 538-residue polypeptide: Atos homolog protein B (538 aa).

2 stretches are compositionally biased toward polar residues: residues M1–S12 and G129–R141. 3 disordered regions span residues M1–T98, G129–T185, and L201–C303. A compositionally biased stretch (pro residues) spans H227–C238. A phosphoserine mark is found at S254 and S255. Residues L348 to T430 form a required for macropage invasion region. The segment at Q436 to V444 is transactivation domain 1 (TAD1).

The protein belongs to the ATOS family.

The protein resides in the nucleus. In terms of biological role, transcription regulator that may syncronize transcriptional and translational programs. This is Atos homolog protein B from Bos taurus (Bovine).